Reading from the N-terminus, the 371-residue chain is Glycosyltransferase 8 domain-containing protein 1 (371 aa).

Topologically, residues 1-5 (MSFRK) are cytoplasmic. The helical; Signal-anchor for type II membrane protein transmembrane segment at 6–26 (VTIIIWALAVILFLLALHHNF) threads the bilayer. Residues 27 to 371 (LSLSSLLRND…RRHMDTSNIK (345 aa)) lie on the Lumenal side of the membrane. N257 is a glycosylation site (N-linked (GlcNAc...) asparagine).

Belongs to the glycosyltransferase 8 family.

The protein resides in the membrane. The sequence is that of Glycosyltransferase 8 domain-containing protein 1 (Glt8d1) from Rattus norvegicus (Rat).